Here is a 381-residue protein sequence, read N- to C-terminus: Pentatricopeptide repeat-containing protein 2, mitochondrial (381 aa).

The stretch at 159-193 (TSFNILMDMLFTKGKYERALQVLIEMKNQDVRFSK) is one PPR repeat. Ser375 is subject to Phosphoserine.

The protein belongs to the PTCD2 family. In terms of tissue distribution, high expression in heart and liver and low expression in kidney, brain and testis.

The protein localises to the mitochondrion. In terms of biological role, involved in mitochondrial RNA maturation and mitochondrial respiratory chain function. The polypeptide is Pentatricopeptide repeat-containing protein 2, mitochondrial (Ptcd2) (Mus musculus (Mouse)).